We begin with the raw amino-acid sequence, 431 residues long: Selenocysteine lyase (431 aa).

Residue Lys239 is modified to N6-(pyridoxal phosphate)lysine. Cys367 (S-selanylcysteine intermediate) is an active-site residue.

It belongs to the class-V pyridoxal-phosphate-dependent aminotransferase family. Homodimer. Pyridoxal 5'-phosphate serves as cofactor.

The protein localises to the cytoplasm. Its subcellular location is the cytosol. The enzyme catalyses L-selenocysteine + AH2 = hydrogenselenide + L-alanine + A + H(+). Its function is as follows. Catalyzes the decomposition of L-selenocysteine to L-alanine and elemental selenium. The polypeptide is Selenocysteine lyase (scly) (Xenopus tropicalis (Western clawed frog)).